The chain runs to 90 residues: Progonadoliberin-3 (90 aa).

Positions 1–23 (MEAGSRVIMQVLLLALVVQVTLS) are cleaved as a signal peptide. Pyrrolidone carboxylic acid is present on Gln24. Gly33 carries the post-translational modification Glycine amide.

Belongs to the GnRH family. As to expression, expressed only in the terminal nerve nucleus of the telencephalon.

It localises to the secreted. In terms of biological role, stimulates the secretion of gonadotropins. In Haplochromis burtoni (Burton's mouthbrooder), this protein is Progonadoliberin-3 (gnrh3).